The following is a 355-amino-acid chain: Guanine nucleotide-binding protein G(q) subunit alpha (355 aa).

C3 is lipidated: S-palmitoyl cysteine. In terms of domain architecture, G-alpha spans 32 to 355; sequence KEIKLLLLGT…QHITEVVPGL (324 aa). A G1 motif region spans residues 35–48; it reads KLLLLGTGESGKST. Residues 40–47, 174–180, 199–203, 269–272, and A326 contribute to the GTP site; these read GTGESGKS, LRVRVPT, DVGGQ, and NKKD. S47 and T180 together coordinate Mg(2+). The tract at residues 172-180 is G2 motif; the sequence is DVLRVRVPT. The G3 motif stretch occupies residues 195 to 204; it reads FKMVDVGGQR. The interval 265-272 is G4 motif; sequence ILFLNKKD. Positions 324–329 are G5 motif; that stretch reads TCATDT.

This sequence belongs to the G-alpha family. G(q) subfamily. As to quaternary structure, g proteins are composed of 3 units; alpha, beta and gamma. The alpha chain contains the guanine nucleotide binding site.

Guanine nucleotide-binding proteins (G proteins) are involved as modulators or transducers in various transmembrane signaling systems. This is Guanine nucleotide-binding protein G(q) subunit alpha from Geodia cydonium (Sponge).